We begin with the raw amino-acid sequence, 254 residues long: Aspartate/glutamate leucyltransferase (254 aa).

Belongs to the R-transferase family. Bpt subfamily.

The protein resides in the cytoplasm. It catalyses the reaction N-terminal L-glutamyl-[protein] + L-leucyl-tRNA(Leu) = N-terminal L-leucyl-L-glutamyl-[protein] + tRNA(Leu) + H(+). The catalysed reaction is N-terminal L-aspartyl-[protein] + L-leucyl-tRNA(Leu) = N-terminal L-leucyl-L-aspartyl-[protein] + tRNA(Leu) + H(+). In terms of biological role, functions in the N-end rule pathway of protein degradation where it conjugates Leu from its aminoacyl-tRNA to the N-termini of proteins containing an N-terminal aspartate or glutamate. The chain is Aspartate/glutamate leucyltransferase from Mesorhizobium japonicum (strain LMG 29417 / CECT 9101 / MAFF 303099) (Mesorhizobium loti (strain MAFF 303099)).